The primary structure comprises 380 residues: Cytochrome b (380 aa).

The next 4 membrane-spanning stretches (helical) occupy residues 33-53, 77-98, 113-133, and 178-198; these read FGSL…FLAM, WLIR…YLHI, WNIG…GYVL, and FFAF…LHLL. 2 residues coordinate heme b: His83 and His97. Heme b contacts are provided by His182 and His196. His201 is a binding site for a ubiquinone. The next 4 helical transmembrane spans lie at 226–246, 288–308, 320–340, and 347–367; these read YKDL…ALFT, LGGV…PILH, VTQF…WIGG, and YIII…LIMP.

The protein belongs to the cytochrome b family. The cytochrome bc1 complex contains 3 respiratory subunits (MT-CYB, CYC1 and UQCRFS1), 2 core proteins (UQCRC1 and UQCRC2) and probably 6 low-molecular weight proteins. Heme b serves as cofactor.

The protein localises to the mitochondrion inner membrane. Functionally, component of the ubiquinol-cytochrome c reductase complex (complex III or cytochrome b-c1 complex) that is part of the mitochondrial respiratory chain. The b-c1 complex mediates electron transfer from ubiquinol to cytochrome c. Contributes to the generation of a proton gradient across the mitochondrial membrane that is then used for ATP synthesis. The polypeptide is Cytochrome b (mt-cyb) (Pagrus major (Red sea bream)).